We begin with the raw amino-acid sequence, 181 residues long: Small ribosomal subunit protein uS4 (181 aa).

The S4 RNA-binding domain maps to 108-172 (RRLQTQVYRR…SPLVSDIHSE (65 aa)).

The protein belongs to the universal ribosomal protein uS4 family. In terms of assembly, part of the 30S ribosomal subunit. Contacts protein S5. The interaction surface between S4 and S5 is involved in control of translational fidelity.

Functionally, one of the primary rRNA binding proteins, it binds directly to 16S rRNA where it nucleates assembly of the body of the 30S subunit. Its function is as follows. With S5 and S12 plays an important role in translational accuracy. This is Small ribosomal subunit protein uS4 from Methanospirillum hungatei JF-1 (strain ATCC 27890 / DSM 864 / NBRC 100397 / JF-1).